A 195-amino-acid chain; its full sequence is Molybdenum cofactor guanylyltransferase (195 aa).

GTP-binding positions include 10–12, lysine 23, asparagine 51, aspartate 69, and aspartate 99; that span reads LAG. Aspartate 99 is a Mg(2+) binding site.

The protein belongs to the MobA family. As to quaternary structure, monomer. The cofactor is Mg(2+).

It is found in the cytoplasm. The catalysed reaction is Mo-molybdopterin + GTP + H(+) = Mo-molybdopterin guanine dinucleotide + diphosphate. Transfers a GMP moiety from GTP to Mo-molybdopterin (Mo-MPT) cofactor (Moco or molybdenum cofactor) to form Mo-molybdopterin guanine dinucleotide (Mo-MGD) cofactor. The chain is Molybdenum cofactor guanylyltransferase from Yersinia pseudotuberculosis serotype O:1b (strain IP 31758).